A 339-amino-acid chain; its full sequence is AT-hook motif nuclear-localized protein 26 (339 aa).

The span at 1-12 shows a compositional bias: polar residues; that stretch reads MDPVQSHGSQSS. Disordered stretches follow at residues 1 to 132 and 273 to 339; these read MDPV…NKPK and MQTP…RPPY. A compositionally biased stretch (low complexity) spans 24–45; that stretch reads LHLQQQQQHQQQHQQQQQQQFF. A compositionally biased stretch (polar residues) spans 82–93; it reads NMDNIANTNSGS. Gly residues predominate over residues 102-113; sequence GGEGGSGGGGSG. Residues 118-130 constitute a DNA-binding region (a.T hook); sequence RRPRGRPAGSKNK. The PPC domain occupies 142 to 279; the sequence is ANALRTHVME…EDEMQTPVQG (138 aa). A compositionally biased stretch (gly residues) spans 278–291; the sequence is QGGGGGGGGGGGMG. Residues 292–310 show a composition bias toward low complexity; sequence SPPMMGQQQAMAAMAAAQG.

It localises to the nucleus. Functionally, transcription factor that specifically binds AT-rich DNA sequences related to the nuclear matrix attachment regions (MARs). This chain is AT-hook motif nuclear-localized protein 26, found in Arabidopsis thaliana (Mouse-ear cress).